Here is a 200-residue protein sequence, read N- to C-terminus: NADH-quinone oxidoreductase subunit C (200 aa).

It belongs to the complex I 30 kDa subunit family. As to quaternary structure, NDH-1 is composed of 14 different subunits. Subunits NuoB, C, D, E, F, and G constitute the peripheral sector of the complex.

It is found in the cell inner membrane. It catalyses the reaction a quinone + NADH + 5 H(+)(in) = a quinol + NAD(+) + 4 H(+)(out). In terms of biological role, NDH-1 shuttles electrons from NADH, via FMN and iron-sulfur (Fe-S) centers, to quinones in the respiratory chain. The immediate electron acceptor for the enzyme in this species is believed to be ubiquinone. Couples the redox reaction to proton translocation (for every two electrons transferred, four hydrogen ions are translocated across the cytoplasmic membrane), and thus conserves the redox energy in a proton gradient. The protein is NADH-quinone oxidoreductase subunit C of Chelativorans sp. (strain BNC1).